The following is a 341-amino-acid chain: Paired box protein Pax-9 (341 aa).

The segment at residues 4-130 is a DNA-binding region (paired); that stretch reads AFGEVNQLGG…SSISRILRNK (127 aa). The interval 7–63 is PAI subdomain; sequence EVNQLGGVFVNGRPLPNAIRLRIVELAQLGIRPCDISRQLRVSHGCVSKILARYNET. The segment at 82–130 is RED subdomain; that stretch reads TVVKHIRTYKQRDPGIFAWEIRDRLLADGVCDKYNVPSVSSISRILRNK. The interval 168–189 is interaction with KDM5B; it reads AAAAKVPTPPGVPAIPGSVAMP.

Interacts with KDM5B.

The protein resides in the nucleus. Functionally, transcription factor required for normal development of thymus, parathyroid glands, ultimobranchial bodies, teeth, skeletal elements of skull and larynx as well as distal limbs. The polypeptide is Paired box protein Pax-9 (PAX9) (Propithecus coquereli (Coquerel's sifaka)).